A 715-amino-acid chain; its full sequence is Ribosomal RNA large subunit methyltransferase K/L (715 aa).

The THUMP domain maps to 47–158 (LGYKISLWTR…RDNVTIFLDF (112 aa)).

The protein belongs to the methyltransferase superfamily. RlmKL family.

The protein resides in the cytoplasm. It carries out the reaction guanosine(2445) in 23S rRNA + S-adenosyl-L-methionine = N(2)-methylguanosine(2445) in 23S rRNA + S-adenosyl-L-homocysteine + H(+). It catalyses the reaction guanosine(2069) in 23S rRNA + S-adenosyl-L-methionine = N(2)-methylguanosine(2069) in 23S rRNA + S-adenosyl-L-homocysteine + H(+). Specifically methylates the guanine in position 2445 (m2G2445) and the guanine in position 2069 (m7G2069) of 23S rRNA. The protein is Ribosomal RNA large subunit methyltransferase K/L of Colwellia psychrerythraea (strain 34H / ATCC BAA-681) (Vibrio psychroerythus).